Reading from the N-terminus, the 1159-residue chain is ATP-dependent helicase/deoxyribonuclease subunit B (1159 aa).

This sequence belongs to the helicase family. AddB/RexB type 2 subfamily. In terms of assembly, heterodimer of AddA and RexB. Mg(2+) is required as a cofactor.

Functionally, the heterodimer acts as both an ATP-dependent DNA helicase and an ATP-dependent, dual-direction single-stranded exonuclease. Recognizes the chi site generating a DNA molecule suitable for the initiation of homologous recombination. This subunit has 5' -&gt; 3' nuclease activity but not helicase activity. The sequence is that of ATP-dependent helicase/deoxyribonuclease subunit B from Leuconostoc mesenteroides subsp. mesenteroides (strain ATCC 8293 / DSM 20343 / BCRC 11652 / CCM 1803 / JCM 6124 / NCDO 523 / NBRC 100496 / NCIMB 8023 / NCTC 12954 / NRRL B-1118 / 37Y).